Reading from the N-terminus, the 332-residue chain is T-cell surface glycoprotein CD1c1 (332 aa).

A signal peptide spans 1–17 (MLFLHFLFLDVVLGGSI). Topologically, residues 18-300 (TENVVQENIS…IILYWGHGLS (283 aa)) are extracellular. Asn25, Asn38, Asn75, and Asn146 each carry an N-linked (GlcNAc...) asparagine glycan. 2 disulfide bridges follow: Cys120-Cys184 and Cys224-Cys279. Residues 205 to 292 (PEVWLSSSPN…HSSLRDQDII (88 aa)) enclose the Ig-like domain. Residues 301-321 (VILITFAVIVPLVLLIVLMLL) traverse the membrane as a helical segment. Residues 322-332 (YKKRCTYQGIQ) lie on the Cytoplasmic side of the membrane.

In terms of assembly, heterodimer with B2M (beta-2-microglobulin).

The protein localises to the cell membrane. It localises to the endosome membrane. Its function is as follows. Antigen-presenting protein that binds self and non-self lipid and glycolipid antigens and presents them to T-cell receptors on natural killer T-cells. This Cavia porcellus (Guinea pig) protein is T-cell surface glycoprotein CD1c1 (CD1C1).